A 404-amino-acid chain; its full sequence is Indole-3-acetate O-methyltransferase 1 (404 aa).

S-adenosyl-L-methionine is bound by residues 82 to 83 (GC), Asn88, Asp120, 169 to 171 (TFY), and 186 to 188 (TFS). Mg(2+)-binding residues include Asn208, Val212, Arg294, Asp295, Phe297, and Asn298.

Belongs to the methyltransferase superfamily. SABATH family. As to quaternary structure, homodimer. It depends on Mg(2+) as a cofactor. Expressed in roots and panicles.

The enzyme catalyses (indol-3-yl)acetate + S-adenosyl-L-methionine = methyl (indol-3-yl)acetate + S-adenosyl-L-homocysteine. In terms of biological role, catalyzes the methylation of the free carboxyl end of the plant hormone indole-3-acetic acid (IAA). Converts IAA to IAA methyl ester (MeIAA). Regulates IAA activities by IAA methylation. Methylation of IAA plays an important role in regulating plant development and auxin homeostasis. MeIAA seems to be an inactive form of IAA. The chain is Indole-3-acetate O-methyltransferase 1 (IAMT1) from Oryza sativa subsp. japonica (Rice).